The sequence spans 663 residues: DNA ligase (663 aa).

NAD(+)-binding positions include 33 to 37, 82 to 83, and glutamate 112; these read DYSYD and SI. Lysine 114 acts as the N6-AMP-lysine intermediate in catalysis. NAD(+) is bound by residues arginine 135, glutamate 171, lysine 285, and lysine 309. Residues cysteine 403, cysteine 406, cysteine 419, and cysteine 424 each contribute to the Zn(2+) site. The 83-residue stretch at 581–663 folds into the BRCT domain; sequence DKEAPLQGKV…LRILDAKSVS (83 aa).

Belongs to the NAD-dependent DNA ligase family. LigA subfamily. Mg(2+) serves as cofactor. Mn(2+) is required as a cofactor.

It carries out the reaction NAD(+) + (deoxyribonucleotide)n-3'-hydroxyl + 5'-phospho-(deoxyribonucleotide)m = (deoxyribonucleotide)n+m + AMP + beta-nicotinamide D-nucleotide.. DNA ligase that catalyzes the formation of phosphodiester linkages between 5'-phosphoryl and 3'-hydroxyl groups in double-stranded DNA using NAD as a coenzyme and as the energy source for the reaction. It is essential for DNA replication and repair of damaged DNA. The sequence is that of DNA ligase from Chlamydia trachomatis serovar A (strain ATCC VR-571B / DSM 19440 / HAR-13).